The sequence spans 602 residues: MSRLKRIAGQDPRAGFKAAGRDCGTSVPQGLLKAARKSGQLNLSGRNLSEVPQCVWRINVDIPEEANQNLSFGATERWWEQTDLTKLIISNNKLQSLTDDLRLLPALTVLDIHDNQLTSLPSAMRELENLQKLNVSHNKLKIFPEEITNLRNLKCLYLQHNELTCISEGFEQLSNLEDLDLSNNRLTTVPASFSSLSSLVRLNLSSNQLKSLPAEINRMKRLKHLDCNSNLLETIPPELAGMESLELLYLRRNKLRFLPEFPSCSLLKELHVGENQIEMLEAEHLKHLNSILVLDLRDNKLKSVPDEIILLQSLERLDLSNNDISSLPYSLGNLHLKFLALEGNPLRTIRREIINKGTQEVLKYLRSKIKDDGPSQSESAAETAMTLPSESRVNIHAIITLKILDYSDKQATLIPDEVFNAVKSNIITSINFSKNQLCEIPKRMVELKEMVSDVNLSFNKLSFISLELCMLQKLTFLDLRNNFLNSLPEEMESLVRLQTINLSFNRFKMLPEVLYRIFTLETILISNNQVGSVDPQKMKMMENLTTLDLQNNDLLQIPPELGNCVNLRTLLLDGNPFRVPRAAILIKGTAAILEYLRDRIPT.

Residues 1 to 20 (MSRLKRIAGQDPRAGFKAAG) are disordered. At serine 71 the chain carries Phosphoserine. LRR repeat units lie at residues 83-104 (DLTKLIISNNKLQSLTDDLRLL), 106-127 (ALTVLDIHDNQLTSLPSAMREL), 129-150 (NLQKLNVSHNKLKIFPEEITNL), 152-173 (NLKCLYLQHNELTCISEGFEQL), 175-196 (NLEDLDLSNNRLTTVPASFSSL), 198-219 (SLVRLNLSSNQLKSLPAEINRM), 221-242 (RLKHLDCNSNLLETIPPELAGM), 244-265 (SLELLYLRRNKLRFLPEFPSCS), 266-286 (LLKELHVGENQIEMLEAEHLK), 290-311 (SILVLDLRDNKLKSVPDEIILL), 313-335 (SLERLDLSNNDISSLPYSLGNLH), 336-356 (LKFLALEGNPLRTIRREIINK), 400-421 (TLKILDYSDKQATLIPDEVFNA), 426-447 (IITSINFSKNQLCEIPKRMVEL), 450-471 (MVSDVNLSFNKLSFISLELCML), 473-494 (KLTFLDLRNNFLNSLPEEMESL), 496-517 (RLQTINLSFNRFKMLPEVLYRI), 519-540 (TLETILISNNQVGSVDPQKMKM), 543-564 (NLTTLDLQNNDLLQIPPELGNC), and 566-586 (NLRTLLLDGNPFRVPRAAILI).

In Macaca fascicularis (Crab-eating macaque), this protein is Leucine-rich repeat-containing protein 40 (LRRC40).